We begin with the raw amino-acid sequence, 197 residues long: RNA-binding protein Rsf1 (197 aa).

Residues Thr-7 to Gly-80 form the RRM domain. A disordered region spans residues Arg-74–Phe-197. Basic and acidic residues predominate over residues Gly-89–Arg-102. Thr-106 carries the post-translational modification Phosphothreonine. Low complexity-rich tracts occupy residues Gln-117–Gly-144 and Arg-166–Gly-176. Ser-168, Ser-171, Ser-174, Ser-188, and Ser-190 each carry phosphoserine.

This sequence belongs to the splicing factor SR family. Post-translationally, extensively phosphorylated on serine residues in the RS domain.

It localises to the nucleus. Functionally, may control important aspects of development. The sequence is that of RNA-binding protein Rsf1 (Rsf1) from Drosophila melanogaster (Fruit fly).